The primary structure comprises 207 residues: Holliday junction branch migration complex subunit RuvA (207 aa).

The segment at 1–68 is domain I; it reads MIGYLQGSLA…EDQWLLFGFL (68 aa). The interval 69–147 is domain II; it reads QMAERDLFRQ…EWREEAGLLP (79 aa). Residues 148–158 are flexible linker; it reads SATAAPIAAVQ. Residues 158-207 form a domain III region; it reads QEDVEMTLLALGYNNREILQALTAIAQENLVQSGQPAEDWIREAIAWLSR.

This sequence belongs to the RuvA family. Homotetramer. Forms an RuvA(8)-RuvB(12)-Holliday junction (HJ) complex. HJ DNA is sandwiched between 2 RuvA tetramers; dsDNA enters through RuvA and exits via RuvB. An RuvB hexamer assembles on each DNA strand where it exits the tetramer. Each RuvB hexamer is contacted by two RuvA subunits (via domain III) on 2 adjacent RuvB subunits; this complex drives branch migration. In the full resolvosome a probable DNA-RuvA(4)-RuvB(12)-RuvC(2) complex forms which resolves the HJ.

It localises to the cytoplasm. The RuvA-RuvB-RuvC complex processes Holliday junction (HJ) DNA during genetic recombination and DNA repair, while the RuvA-RuvB complex plays an important role in the rescue of blocked DNA replication forks via replication fork reversal (RFR). RuvA specifically binds to HJ cruciform DNA, conferring on it an open structure. The RuvB hexamer acts as an ATP-dependent pump, pulling dsDNA into and through the RuvAB complex. HJ branch migration allows RuvC to scan DNA until it finds its consensus sequence, where it cleaves and resolves the cruciform DNA. This is Holliday junction branch migration complex subunit RuvA from Synechococcus elongatus (strain ATCC 33912 / PCC 7942 / FACHB-805) (Anacystis nidulans R2).